The chain runs to 295 residues: UDP-N-acetylenolpyruvoylglucosamine reductase (295 aa).

Residues 24-188 enclose the FAD-binding PCMH-type domain; it reads KVGGNAEIFF…LKVVFKINKG (165 aa). R168 is a catalytic residue. Catalysis depends on S217, which acts as the Proton donor. The active site involves E287.

This sequence belongs to the MurB family. Requires FAD as cofactor.

The protein resides in the cytoplasm. It carries out the reaction UDP-N-acetyl-alpha-D-muramate + NADP(+) = UDP-N-acetyl-3-O-(1-carboxyvinyl)-alpha-D-glucosamine + NADPH + H(+). The protein operates within cell wall biogenesis; peptidoglycan biosynthesis. Functionally, cell wall formation. The protein is UDP-N-acetylenolpyruvoylglucosamine reductase of Rickettsia peacockii (strain Rustic).